The following is a 176-amino-acid chain: UBA-like domain-containing protein 1 (176 aa).

Low complexity-rich tracts occupy residues 88–105 (ESFH…TSAT) and 120–137 (TPSW…QHLQ). A disordered region spans residues 88 to 176 (ESFHSGGSSG…RAHPAMEAER (89 aa)). The segment covering 138-150 (PQPPLWTPAPPSP) has biased composition (pro residues). Residues 166–176 (PRAHPAMEAER) show a composition bias toward basic and acidic residues.

It belongs to the UBALD family.

In Rattus norvegicus (Rat), this protein is UBA-like domain-containing protein 1 (Ubald1).